Reading from the N-terminus, the 398-residue chain is G2/mitotic-specific cyclin-B2 (398 aa).

2 disordered regions span residues 1–26 (MALLRRPTVSTDLENNDTGVNSKPKS) and 53–76 (AQNTKVPVPPTKTTNVNKHPKPTA). Thr8 bears the Phosphothreonine mark. The span at 8–23 (TVSTDLENNDTGVNSK) shows a compositional bias: polar residues. Residues 55–69 (NTKVPVPPTKTTNVN) show a composition bias toward low complexity. A phosphoserine mark is found at Ser77 and Ser92. Thr94 is modified (phosphothreonine). Residues Ser99, Ser392, and Ser398 each carry the phosphoserine modification.

Belongs to the cyclin family. Cyclin AB subfamily. Interacts with the CDK1 protein kinase to form a serine/threonine kinase holoenzyme complex also known as maturation promoting factor (MPF). The cyclin subunit imparts substrate specificity to the complex.

In terms of biological role, essential for the control of the cell cycle at the G2/M (mitosis) transition. The chain is G2/mitotic-specific cyclin-B2 (CCNB2) from Bos taurus (Bovine).